Consider the following 160-residue polypeptide: MTKKKAYKPGSATIAQNKRARHEYFIEEEFEAGLSLQGWEVKSLRAGKANISDSYVTFRNGEAFLFGATITPLNVASTHVVCEPMRTRKLLLNKRELDSLIGKVNRDGFTVVALSVYWKNAWVKVKIGVAKGKKDHDKRDDIKDREWKLDKARIMKHANR.

The protein belongs to the SmpB family.

The protein resides in the cytoplasm. In terms of biological role, required for rescue of stalled ribosomes mediated by trans-translation. Binds to transfer-messenger RNA (tmRNA), required for stable association of tmRNA with ribosomes. tmRNA and SmpB together mimic tRNA shape, replacing the anticodon stem-loop with SmpB. tmRNA is encoded by the ssrA gene; the 2 termini fold to resemble tRNA(Ala) and it encodes a 'tag peptide', a short internal open reading frame. During trans-translation Ala-aminoacylated tmRNA acts like a tRNA, entering the A-site of stalled ribosomes, displacing the stalled mRNA. The ribosome then switches to translate the ORF on the tmRNA; the nascent peptide is terminated with the 'tag peptide' encoded by the tmRNA and targeted for degradation. The ribosome is freed to recommence translation, which seems to be the essential function of trans-translation. The chain is SsrA-binding protein from Yersinia enterocolitica serotype O:8 / biotype 1B (strain NCTC 13174 / 8081).